We begin with the raw amino-acid sequence, 1196 residues long: DNA-directed RNA polymerase subunit beta (1196 aa).

Belongs to the RNA polymerase beta chain family. As to quaternary structure, the RNAP catalytic core consists of 2 alpha, 1 beta, 1 beta' and 1 omega subunit. When a sigma factor is associated with the core the holoenzyme is formed, which can initiate transcription.

The catalysed reaction is RNA(n) + a ribonucleoside 5'-triphosphate = RNA(n+1) + diphosphate. Its function is as follows. DNA-dependent RNA polymerase catalyzes the transcription of DNA into RNA using the four ribonucleoside triphosphates as substrates. The sequence is that of DNA-directed RNA polymerase subunit beta from Lactococcus lactis subsp. cremoris (strain SK11).